A 339-amino-acid chain; its full sequence is Fructose-1,6-bisphosphatase class 1 (339 aa).

The Mg(2+) site is built by E92, D114, L116, and D117. Residues 117-120, N209, and K275 each bind substrate; that span reads DGSS. E281 is a Mg(2+) binding site.

The protein belongs to the FBPase class 1 family. Homotetramer. Mg(2+) is required as a cofactor.

The protein localises to the cytoplasm. It carries out the reaction beta-D-fructose 1,6-bisphosphate + H2O = beta-D-fructose 6-phosphate + phosphate. It participates in carbohydrate biosynthesis; gluconeogenesis. This chain is Fructose-1,6-bisphosphatase class 1, found in Acidithiobacillus ferrooxidans (strain ATCC 53993 / BNL-5-31) (Leptospirillum ferrooxidans (ATCC 53993)).